Consider the following 125-residue polypeptide: Small ribosomal subunit protein uS12m (125 aa).

The interval 1 to 26 (MPTINQLLRKKSSRQAPKLKSKKPAL) is disordered. Positions 8-23 (LRKKSSRQAPKLKSKK) are enriched in basic residues.

This sequence belongs to the universal ribosomal protein uS12 family.

Its subcellular location is the mitochondrion. The protein is Small ribosomal subunit protein uS12m (RPS12) of Prototheca wickerhamii.